Reading from the N-terminus, the 104-residue chain is UPF0213 protein PA3854 (104 aa).

A GIY-YIG domain is found at 13-88; the sequence is KCWSVYLVRA…KALSKRAKER (76 aa).

It belongs to the UPF0213 family.

The polypeptide is UPF0213 protein PA3854 (Pseudomonas aeruginosa (strain ATCC 15692 / DSM 22644 / CIP 104116 / JCM 14847 / LMG 12228 / 1C / PRS 101 / PAO1)).